The chain runs to 256 residues: MESWLTSFITQSLVYSLLVVGIVSFLESLALVGLLLPGIILMTTLGTFIGDGKLSFYPAWISGTTGCLLGDWISYYIGLYFKNWLYNFNFLKKNQKLLDKTKSFLDKHSMLTIILGRFIGPTRPLIPMVSGMLKLPLKKFVFPSIIGCILWPPVYFFPGIVTGIAIKIPESSQSYYFKWLLLLISILIWLGIWLISKWWKMRKNHIDNRTSFFTKKKIGWLAILTMSSGILSLIAIQFHPTMLIFREIFSTILLGT.

The next 6 helical transmembrane spans lie at 6-26, 29-49, 61-81, 145-165, 175-195, and 218-238; these read TSFITQSLVYSLLVVGIVSFL, LALVGLLLPGIILMTTLGTFI, ISGTTGCLLGDWISYYIGLYF, IIGCILWPPVYFFPGIVTGIA, YYFKWLLLLISILIWLGIWLI, and IGWLAILTMSSGILSLIAIQF.

The protein belongs to the DedA family.

It is found in the cell membrane. This is an uncharacterized protein from Buchnera aphidicola subsp. Acyrthosiphon pisum (strain APS) (Acyrthosiphon pisum symbiotic bacterium).